Here is a 362-residue protein sequence, read N- to C-terminus: D-alanine--D-alanine ligase (362 aa).

The 206-residue stretch at 141–346 (KNIFAEAGLN…YPELIEELIR (206 aa)) folds into the ATP-grasp domain. 174–229 (EEALGYPCFVKPANLGSSVGINKCKDREELEKAFEEAFQFDRKIIVEENIIGREVE) contacts ATP. Mg(2+) is bound by residues Asp-300, Glu-313, and Asn-315.

This sequence belongs to the D-alanine--D-alanine ligase family. Requires Mg(2+) as cofactor. It depends on Mn(2+) as a cofactor.

The protein resides in the cytoplasm. It carries out the reaction 2 D-alanine + ATP = D-alanyl-D-alanine + ADP + phosphate + H(+). It functions in the pathway cell wall biogenesis; peptidoglycan biosynthesis. In terms of biological role, cell wall formation. This is D-alanine--D-alanine ligase from Bacillus cytotoxicus (strain DSM 22905 / CIP 110041 / 391-98 / NVH 391-98).